We begin with the raw amino-acid sequence, 502 residues long: METDFSLVRKEEEEEEDNRNGMSYLSMEMMKKVSSMAAPMVAVSVSQFLLQVISMVMAGHLDELSLSAVAIATSLTNVTGFSLIVGFAGALDTLCGQAFGAEQFGKIGAYTYSSMLCLLVFCFSISIVWFFMDKLLEIFHQDPLISQLACRYSIWLIPALFGFTLLQPMTRYFQSQGITLPLFVSSLGALCFHIPFCWLLVYKLKFGIVGAALSIGFSYWLNVFLLWIFMRYSALHREMKNLGLQELISSMKQFIALAIPSAMMICLEWWSFEILLLMSGLLPNSKLETSVISICLTTSAVHFVLVNAIGASASTHVSNELGAGNHRAARAAVNSAIFLGGVGALITTITLYSYRKSWGYVFSNEREVVRYATQITPILCLSIFVNSFLAVLSGVARGSGWQRIGGYASLGSYYLVGIPLGWFLCFVMKLRGKGLWIGILIASTIQLIVFALVTFFTNWEQEATKARDRVFEMTPQVKGNQKTQIIVEEDTQVLLNHIAETV.

A run of 12 helical transmembrane segments spans residues Met36–Val56, Ala68–Ala88, Tyr112–Met132, Pro143–Phe163, Leu182–Tyr202, Ile208–Ile228, Ala262–Leu282, Val291–Ala311, Ala331–Leu351, Ile375–Val395, Ala408–Met428, and Trp436–Phe456.

The protein belongs to the multi antimicrobial extrusion (MATE) (TC 2.A.66.1) family.

The protein resides in the membrane. The polypeptide is Protein DETOXIFICATION 7 (Arabidopsis thaliana (Mouse-ear cress)).